A 369-amino-acid polypeptide reads, in one-letter code: 2-aminoethylphosphonate--pyruvate transaminase (369 aa).

An N6-(pyridoxal phosphate)lysine modification is found at lysine 193.

The protein belongs to the class-V pyridoxal-phosphate-dependent aminotransferase family. PhnW subfamily. Homodimer. Requires pyridoxal 5'-phosphate as cofactor.

It carries out the reaction (2-aminoethyl)phosphonate + pyruvate = phosphonoacetaldehyde + L-alanine. In terms of biological role, involved in phosphonate degradation. This Burkholderia thailandensis (strain ATCC 700388 / DSM 13276 / CCUG 48851 / CIP 106301 / E264) protein is 2-aminoethylphosphonate--pyruvate transaminase.